The chain runs to 183 residues: COMM domain-containing protein 8 (183 aa).

The region spanning 116–183 is the COMM domain; sequence QLQDFDWQVK…AANKVVLQLK (68 aa).

It belongs to the COMM domain-containing protein 8 family. In terms of assembly, component of the commander complex consisting of the CCC subcomplex and the retriever subcomplex. Component of the CCC (COMMD/CCDC22/CCDC93) subcomplex consisting of COMMD1, COMMD2, COMMD3, COMMD4, COMMD5, COMMD6, COMMD7, COMMD8, COMMD9, COMMD10, CCDC22 and CCDC93; within the complex forms a heterodimer with COMMD4. Interacts with RELA, RELB, NFKB1/p105. Interacts with CCDC22, CCDC93, SCNN1B, CUL1, CUL2, CUL3, CUL4A, CUL4B, CUL5. Widely expressed with highest expression in thyroid.

It localises to the cytoplasm. It is found in the nucleus. Its function is as follows. Scaffold protein in the commander complex that is essential for endosomal recycling of transmembrane cargos; the commander complex is composed of the CCC subcomplex and the retriever subcomplex. May modulate activity of cullin-RING E3 ubiquitin ligase (CRL) complexes. May down-regulate activation of NF-kappa-B. The protein is COMM domain-containing protein 8 (COMMD8) of Homo sapiens (Human).